A 513-amino-acid polypeptide reads, in one-letter code: ATP synthase subunit alpha 1 (513 aa).

Residue 169 to 176 (GDRQTGKT) participates in ATP binding.

The protein belongs to the ATPase alpha/beta chains family. As to quaternary structure, F-type ATPases have 2 components, CF(1) - the catalytic core - and CF(0) - the membrane proton channel. CF(1) has five subunits: alpha(3), beta(3), gamma(1), delta(1), epsilon(1). CF(0) has three main subunits: a(1), b(2) and c(9-12). The alpha and beta chains form an alternating ring which encloses part of the gamma chain. CF(1) is attached to CF(0) by a central stalk formed by the gamma and epsilon chains, while a peripheral stalk is formed by the delta and b chains.

The protein localises to the cell inner membrane. The enzyme catalyses ATP + H2O + 4 H(+)(in) = ADP + phosphate + 5 H(+)(out). Functionally, produces ATP from ADP in the presence of a proton gradient across the membrane. The alpha chain is a regulatory subunit. This chain is ATP synthase subunit alpha 1, found in Nitrosospira multiformis (strain ATCC 25196 / NCIMB 11849 / C 71).